The primary structure comprises 357 residues: Cobalt-precorrin-5B C(1)-methyltransferase (357 aa).

Belongs to the CbiD family.

The enzyme catalyses Co-precorrin-5B + S-adenosyl-L-methionine = Co-precorrin-6A + S-adenosyl-L-homocysteine. The protein operates within cofactor biosynthesis; adenosylcobalamin biosynthesis; cob(II)yrinate a,c-diamide from sirohydrochlorin (anaerobic route): step 6/10. Functionally, catalyzes the methylation of C-1 in cobalt-precorrin-5B to form cobalt-precorrin-6A. This is Cobalt-precorrin-5B C(1)-methyltransferase from Gloeobacter violaceus (strain ATCC 29082 / PCC 7421).